A 646-amino-acid chain; its full sequence is Phosphomethylpyrimidine synthase (646 aa).

Residues Asn-235, Met-264, Tyr-293, His-329, 349–351 (SRG), 390–393 (DGLR), and Glu-429 contribute to the substrate site. His-433 contacts Zn(2+). Residue Tyr-456 coordinates substrate. His-497 provides a ligand contact to Zn(2+). Residues Cys-577, Cys-580, and Cys-585 each contribute to the [4Fe-4S] cluster site. The disordered stretch occupies residues 624–646 (KSEEFRATGSELYHPAVHAEADE).

This sequence belongs to the ThiC family. In terms of assembly, homodimer. The cofactor is [4Fe-4S] cluster.

It carries out the reaction 5-amino-1-(5-phospho-beta-D-ribosyl)imidazole + S-adenosyl-L-methionine = 4-amino-2-methyl-5-(phosphooxymethyl)pyrimidine + CO + 5'-deoxyadenosine + formate + L-methionine + 3 H(+). It functions in the pathway cofactor biosynthesis; thiamine diphosphate biosynthesis. In terms of biological role, catalyzes the synthesis of the hydroxymethylpyrimidine phosphate (HMP-P) moiety of thiamine from aminoimidazole ribotide (AIR) in a radical S-adenosyl-L-methionine (SAM)-dependent reaction. This Vibrio parahaemolyticus serotype O3:K6 (strain RIMD 2210633) protein is Phosphomethylpyrimidine synthase.